The following is a 1366-amino-acid chain: Agglutinin-like protein 6 (1366 aa).

A signal peptide spans 1 to 18; sequence MKTVILLHLFFYCTIAMA. 4 disulfide bridges follow: cysteine 74-cysteine 151, cysteine 97-cysteine 113, cysteine 206-cysteine 301, and cysteine 228-cysteine 257. N-linked (GlcNAc...) asparagine glycosylation occurs at asparagine 294. ALS repeat units follow at residues 368–399, 404–435, 441–472, 477–508, 513–544, and 549–580; these read TTIT…VDVP, TTIT…VQVP, VTTT…IKEP, VTTT…VREP, and VTTT…IHDP. The disordered stretch occupies residues 449–470; the sequence is GSVPTTETVTTGPQGTDSVIIK. Low complexity predominate over residues 451 to 464; that stretch reads VPTTETVTTGPQGT. Disordered stretches follow at residues 583 to 658, 758 to 780, and 804 to 833; these read ESSS…TSES, LSSD…FPHT, and VSLT…SDQS. Asparagine 596 carries N-linked (GlcNAc...) asparagine glycosylation. Composition is skewed to low complexity over residues 758–775 and 805–833; these read LSSD…SPSD and SLTS…SDQS. Asparagine 866 carries N-linked (GlcNAc...) asparagine glycosylation. 5 disordered regions span residues 874–915, 928–976, 996–1040, 1081–1130, and 1158–1218; these read ESES…STVT, TGMP…TSAS, SETS…KESS, EDNE…VSSV, and ETSL…STNN. Low complexity-rich tracts occupy residues 875-889, 898-915, and 940-958; these read SESS…ASES, SEST…STVT, and TSDV…PTSA. The span at 959–969 shows a compositional bias: polar residues; sequence EQSITDNPNID. The span at 996-1021 shows a compositional bias: low complexity; the sequence is SETSTLSSDDSTSSDTSISSTTNSDT. 2 stretches are compositionally biased toward polar residues: residues 1022-1040 and 1085-1107; these read GNIN…KESS and PNTF…SVLS. 2 stretches are compositionally biased toward low complexity: residues 1121–1130 and 1158–1177; these read VTDTTTVSSV and ETSL…SSGT. Polar residues-rich tracts occupy residues 1192-1202 and 1209-1218; these read TSTDNRLSYST and TYANSGSTNN. Asparagine 1273 is a glycosylation site (N-linked (GlcNAc...) asparagine). Serine 1345 carries GPI-anchor amidated serine lipidation. A propeptide spans 1346–1366 (removed in mature form); the sequence is SATKHPSWLLKFISVALFFFL.

Belongs to the ALS family. In terms of processing, the GPI-anchor is attached to the protein in the endoplasmic reticulum and serves to target the protein to the cell surface. There, the glucosamine-inositol phospholipid moiety is cleaved off and the GPI-modified mannoprotein is covalently attached via its lipidless GPI glycan remnant to the 1,6-beta-glucan of the outer cell wall layer.

The protein resides in the cell membrane. It is found in the secreted. It localises to the cell wall. In terms of biological role, cell surface adhesion protein which mediates both yeast-to-host tissue adherence and yeast aggregation. Plays an important role in the pathogenesis of C.albicans infections. This is Agglutinin-like protein 6 (ALS6) from Candida albicans (strain SC5314 / ATCC MYA-2876) (Yeast).